A 312-amino-acid polypeptide reads, in one-letter code: Ribonuclease Z (312 aa).

Residues histidine 62, histidine 64, aspartate 66, histidine 67, histidine 144, aspartate 215, and histidine 273 each coordinate Zn(2+). The active-site Proton acceptor is aspartate 66.

Belongs to the RNase Z family. In terms of assembly, homodimer. The cofactor is Zn(2+).

The catalysed reaction is Endonucleolytic cleavage of RNA, removing extra 3' nucleotides from tRNA precursor, generating 3' termini of tRNAs. A 3'-hydroxy group is left at the tRNA terminus and a 5'-phosphoryl group is left at the trailer molecule.. In terms of biological role, zinc phosphodiesterase, which displays some tRNA 3'-processing endonuclease activity. Probably involved in tRNA maturation, by removing a 3'-trailer from precursor tRNA. In Prochlorococcus marinus (strain AS9601), this protein is Ribonuclease Z.